The primary structure comprises 300 residues: Iodotyrosine deiodinase (300 aa).

Residues 15 to 31 (VGLISVSIAAGVALGQL) traverse the membrane as a helical segment. FMN contacts are provided by residues 110 to 114 (RRSVR), S138, and 138 to 139 (SG). 3,5-diiodo-L-tyrosine is bound by residues A140, E167, Y171, and K192. Residues A140, E167, Y171, and K192 each coordinate 3-iodo-L-tyrosine. Residues 247–249 (TTT) and R289 each bind FMN.

Belongs to the nitroreductase family. FMN is required as a cofactor. In terms of processing, may be cleaved at Gln-55. The cleaved form retains catalytic activity.

The protein resides in the membrane. The enzyme catalyses 2 iodide + L-tyrosine + 2 NADP(+) = 3,5-diiodo-L-tyrosine + 2 NADPH + H(+). It catalyses the reaction iodide + L-tyrosine + NADP(+) = 3-iodo-L-tyrosine + NADPH. The catalysed reaction is 3-iodo-L-tyrosine + iodide + NADP(+) = 3,5-diiodo-L-tyrosine + NADPH + H(+). It carries out the reaction L-tyrosine + chloride + NADP(+) = 3-chloro-L-tyrosine + NADPH. The enzyme catalyses bromide + L-tyrosine + NADP(+) = 3-bromo-L-tyrosine + NADPH. Catalyzes the dehalogenation of halotyrosines such as 3,5-diiodo-L-tyrosine. Likely to also catalyze the dehalogenation of other halotyrosines such as 3-bromo-L-tyrosine, 3-chloro-L-tyrosine and 3-iodo-L-tyrosine. This Daphnia pulex (Water flea) protein is Iodotyrosine deiodinase.